A 434-amino-acid polypeptide reads, in one-letter code: ATP-dependent protease ATPase subunit HslU (434 aa).

ATP is bound by residues isoleucine 18, 60 to 65 (GVGKTE), aspartate 247, glutamate 312, and arginine 384.

This sequence belongs to the ClpX chaperone family. HslU subfamily. In terms of assembly, a double ring-shaped homohexamer of HslV is capped on each side by a ring-shaped HslU homohexamer. The assembly of the HslU/HslV complex is dependent on binding of ATP.

The protein localises to the cytoplasm. In terms of biological role, ATPase subunit of a proteasome-like degradation complex; this subunit has chaperone activity. The binding of ATP and its subsequent hydrolysis by HslU are essential for unfolding of protein substrates subsequently hydrolyzed by HslV. HslU recognizes the N-terminal part of its protein substrates and unfolds these before they are guided to HslV for hydrolysis. This is ATP-dependent protease ATPase subunit HslU from Sinorhizobium fredii (strain NBRC 101917 / NGR234).